A 185-amino-acid chain; its full sequence is Orotate phosphoribosyltransferase (185 aa).

5-phospho-alpha-D-ribose 1-diphosphate-binding positions include Arg98, Lys99, Lys102, His104, and 128–136 (EDVTTTGGS). Residues Thr132 and Arg160 each coordinate orotate.

Belongs to the purine/pyrimidine phosphoribosyltransferase family. PyrE subfamily. As to quaternary structure, homodimer. Mg(2+) serves as cofactor.

It catalyses the reaction orotidine 5'-phosphate + diphosphate = orotate + 5-phospho-alpha-D-ribose 1-diphosphate. Its pathway is pyrimidine metabolism; UMP biosynthesis via de novo pathway; UMP from orotate: step 1/2. Its function is as follows. Catalyzes the transfer of a ribosyl phosphate group from 5-phosphoribose 1-diphosphate to orotate, leading to the formation of orotidine monophosphate (OMP). In Bradyrhizobium sp. (strain ORS 278), this protein is Orotate phosphoribosyltransferase.